A 373-amino-acid polypeptide reads, in one-letter code: ADP-forming sulfoacetate-CoA ligase subunit SauC (373 aa).

The ATP-grasp domain occupies Lys-9 to Leu-249. Phe-35 to Ile-97 is an ATP binding site. Positions 186 and 188 each coordinate Mg(2+).

This sequence belongs to the succinate/malate CoA ligase beta subunit family. In terms of assembly, forms a complex with SauD. Mg(2+) is required as a cofactor.

It catalyses the reaction sulfoacetate + ATP + CoA = sulfoacetyl-CoA + ADP + phosphate. Involved in the degradation of sulfoacetate. Catalyzes the CoA- and ATP-dependent conversion of sulfoacetate to sulfoacetyl-CoA and ADP. Cannot use other sulfonic and carboxylic acids, and shows only residual activity with 3-sulfopropanoate and malonic acid. This is ADP-forming sulfoacetate-CoA ligase subunit SauC from Bilophila wadsworthia (strain 3_1_6).